A 232-amino-acid chain; its full sequence is Ubiquinone biosynthesis O-methyltransferase (232 aa).

S-adenosyl-L-methionine contacts are provided by R36, G55, D76, and M120.

This sequence belongs to the methyltransferase superfamily. UbiG/COQ3 family.

It catalyses the reaction a 3-demethylubiquinol + S-adenosyl-L-methionine = a ubiquinol + S-adenosyl-L-homocysteine + H(+). The enzyme catalyses a 3-(all-trans-polyprenyl)benzene-1,2-diol + S-adenosyl-L-methionine = a 2-methoxy-6-(all-trans-polyprenyl)phenol + S-adenosyl-L-homocysteine + H(+). Its pathway is cofactor biosynthesis; ubiquinone biosynthesis. Its function is as follows. O-methyltransferase that catalyzes the 2 O-methylation steps in the ubiquinone biosynthetic pathway. This Thiobacillus denitrificans (strain ATCC 25259 / T1) protein is Ubiquinone biosynthesis O-methyltransferase.